The chain runs to 1028 residues: Isoleucine--tRNA ligase (1028 aa).

The 'HIGH' region signature appears at 51-61; the sequence is PTANGRPHIGH. Residues 591–595 carry the 'KMSKS' region motif; sequence KMSKS. Lysine 594 contacts ATP.

Belongs to the class-I aminoacyl-tRNA synthetase family. IleS type 2 subfamily. In terms of assembly, monomer. It depends on Zn(2+) as a cofactor.

Its subcellular location is the cytoplasm. The enzyme catalyses tRNA(Ile) + L-isoleucine + ATP = L-isoleucyl-tRNA(Ile) + AMP + diphosphate. In terms of biological role, catalyzes the attachment of isoleucine to tRNA(Ile). As IleRS can inadvertently accommodate and process structurally similar amino acids such as valine, to avoid such errors it has two additional distinct tRNA(Ile)-dependent editing activities. One activity is designated as 'pretransfer' editing and involves the hydrolysis of activated Val-AMP. The other activity is designated 'posttransfer' editing and involves deacylation of mischarged Val-tRNA(Ile). The protein is Isoleucine--tRNA ligase of Thermoplasma volcanium (strain ATCC 51530 / DSM 4299 / JCM 9571 / NBRC 15438 / GSS1).